A 172-amino-acid polypeptide reads, in one-letter code: Nicotinamide-nucleotide adenylyltransferase (172 aa).

This sequence belongs to the archaeal NMN adenylyltransferase family.

It localises to the cytoplasm. The catalysed reaction is beta-nicotinamide D-ribonucleotide + ATP + H(+) = diphosphate + NAD(+). The protein operates within cofactor biosynthesis; NAD(+) biosynthesis; NAD(+) from nicotinamide D-ribonucleotide: step 1/1. This chain is Nicotinamide-nucleotide adenylyltransferase, found in Saccharolobus solfataricus (strain ATCC 35092 / DSM 1617 / JCM 11322 / P2) (Sulfolobus solfataricus).